The chain runs to 180 residues: D-lyxose ketol-isomerase (180 aa).

K62 contributes to the D-fructose binding site. H75 and H77 together coordinate Mn(2+). K86 is a binding site for D-fructose. The Mn(2+) site is built by E88 and H143. D-fructose contacts are provided by E156, D166, and R175.

This sequence belongs to the D-lyxose ketol-isomerase family. Homodimer; disulfide-linked. Stabilized by a disulfide bond between the two monomers of the dimeric enzyme and increased hydrophobicity at the dimer interface. Mn(2+) is required as a cofactor.

It catalyses the reaction D-lyxose = D-xylulose. Sugar isomerase that catalyzes the reversible isomerization of D-lyxose to D-xylulose. Is highly specific for the substrate D-lyxose, showing less than 2% activity towards mannose and other substrates reported for lyxose isomerases. The polypeptide is D-lyxose ketol-isomerase (Thermofilum sp. (strain ex4484_79)).